The sequence spans 365 residues: Probable protein kinase At2g41970 (365 aa).

The disordered stretch occupies residues 1-50; the sequence is MFCCGGADEEPAGPPANQYAAPPNKAGNPNFGGGNRGEPRNPNAPRSGAP. The Protein kinase domain maps to 73 to 354; sequence FGNKALIGEG…IVVKALQPLL (282 aa). Residues 79 to 87 and Lys-100 each bind ATP; that span reads IGEGSYGRV. The residue at position 146 (Tyr-146) is a Phosphotyrosine. The Proton acceptor role is filled by Asp-204. A phosphoserine mark is found at Ser-208 and Ser-238. 2 positions are modified to phosphothreonine: Thr-239 and Thr-244. Tyr-252 carries the phosphotyrosine modification.

This sequence belongs to the protein kinase superfamily. Tyr protein kinase family.

The polypeptide is Probable protein kinase At2g41970 (Arabidopsis thaliana (Mouse-ear cress)).